The chain runs to 175 residues: MNIKRNKPNILITGTPGTGKTSLAGVIASNNEMNHIDISSAVKEKELHDGWDSEFQCYILDEDKVCDEFEDVMVKGGNVVDHHGCEWFPERWFDLVIVLRTDIKILNDRLEKRNYNQHKITNNLDCEIMQVILDEARNSYKQEIVVELPSTTLEDNENNQNFISQWIQNWYEKNN.

The ATP site is built by Gly17, Gly19, Lys20, Thr21, and Ser22. Residues 37–60 (DISSAVKEKELHDGWDSEFQCYIL) are NMPbind. An LID region spans residues 112 to 122 (KRNYNQHKITN). Residue Arg113 participates in ATP binding.

It belongs to the adenylate kinase family. AK6 subfamily. As to quaternary structure, monomer and homodimer. Interacts with small ribosomal subunit protein uS11. Not a structural component of 43S pre-ribosomes, but transiently interacts with them by binding to uS11.

It localises to the cytoplasm. It is found in the nucleus. It catalyses the reaction AMP + ATP = 2 ADP. It carries out the reaction ATP + H2O = ADP + phosphate + H(+). In terms of biological role, broad-specificity nucleoside monophosphate (NMP) kinase that catalyzes the reversible transfer of the terminal phosphate group between nucleoside triphosphates and monophosphates. Also has ATPase activity. Involved in the late cytoplasmic maturation steps of the 40S ribosomal particles, specifically 18S rRNA maturation. While NMP activity is not required for ribosome maturation, ATPase activity is. Associates transiently with small ribosomal subunit protein uS11. ATP hydrolysis breaks the interaction with uS11. May temporarily remove uS11 from the ribosome to enable a conformational change of the ribosomal RNA that is needed for the final maturation step of the small ribosomal subunit. Its NMP activity may have a role in nuclear energy homeostasis. In Dictyostelium discoideum (Social amoeba), this protein is Adenylate kinase isoenzyme 6 homolog.